Reading from the N-terminus, the 325-residue chain is GMP reductase (325 aa).

Residue Cys-174 is the Thioimidate intermediate of the active site. 203–226 serves as a coordination point for NADP(+); it reads LIADGGIRTHGDIAKSIRFGATMV.

Belongs to the IMPDH/GMPR family. GuaC type 2 subfamily.

The catalysed reaction is IMP + NH4(+) + NADP(+) = GMP + NADPH + 2 H(+). Functionally, catalyzes the irreversible NADPH-dependent deamination of GMP to IMP. It functions in the conversion of nucleobase, nucleoside and nucleotide derivatives of G to A nucleotides, and in maintaining the intracellular balance of A and G nucleotides. The sequence is that of GMP reductase from Pediococcus pentosaceus (strain ATCC 25745 / CCUG 21536 / LMG 10740 / 183-1w).